Here is a 342-residue protein sequence, read N- to C-terminus: GTPase Obg (342 aa).

One can recognise an Obg domain in the interval 1–159; the sequence is MQFIDQAQIE…KLLRLELKLL (159 aa). The region spanning 160-330 is the OBG-type G domain; it reads AEVGIIGLPN…MLQEVWGILD (171 aa). Residues 166-173, 191-195, 213-216, 280-283, and 311-313 contribute to the GTP site; these read GLPNAGKS, FTTLI, DIPG, NKID, and SAV. 2 residues coordinate Mg(2+): S173 and T193.

The protein belongs to the TRAFAC class OBG-HflX-like GTPase superfamily. OBG GTPase family. In terms of assembly, monomer. Requires Mg(2+) as cofactor.

The protein resides in the cytoplasm. An essential GTPase which binds GTP, GDP and possibly (p)ppGpp with moderate affinity, with high nucleotide exchange rates and a fairly low GTP hydrolysis rate. Plays a role in control of the cell cycle, stress response, ribosome biogenesis and in those bacteria that undergo differentiation, in morphogenesis control. This chain is GTPase Obg, found in Trichormus variabilis (strain ATCC 29413 / PCC 7937) (Anabaena variabilis).